Reading from the N-terminus, the 117-residue chain is Probable glycerol dehydratase-reactivating factor small subunit (117 aa).

Glu-31 is a binding site for Mg(2+).

This sequence belongs to the DdrB/PduH family. In terms of assembly, member of the GDR complex, probably composed of DhaF(2)/DhaG(2). Mg(2+) serves as cofactor.

Functionally, small subunit of the glycerol dehydratase-reactivating factor (GDR), which reactivates suicidally inhibited adenosylcobalamin-dependent glycerol dehydratase. In Citrobacter freundii, this protein is Probable glycerol dehydratase-reactivating factor small subunit.